The chain runs to 2371 residues: MIVPETRPGPSPIAIVGIGLRLPGGCHDAQSYWDLLVHQKDARKPIPPERFNIDGFHKESDGVGSLSMRHGYFLDEPADRFDAGFFSMSQTEVARVDPQQRLLLEVMHEALENAGEVGWRGSNIAVYAGSFGQDWLQMQARDPQDGNVYGITGMDDFVLANRVSYEFDLHGPSMTVKAGCSSSLIALDLACEALQRGDCSGALVGASNLLLSPEYFLALDNLGALSSAGSSNTFDTNASGYARADAVNAVYVKRLDDALRDGNPIRAIVRSTAVNSDGKTVGLTNPSTDAQARLIRRAYEKAGIINPGETPVVECHGTGTATGDPQEVAAVVQVFSVMKLTQIPQVKPNIGHGEGAAGLSSLIKAVLSLERNTIPPNIKFTTPNPKIPFTEARLVVPTKATPWPKGRSRRISVDSFGLGGANAHVILEGYSTTPSPHRNGIPKVNGHTKTSTLQRLLVFSAHNETSIAKMTSNYQAFTESESYRVKDLAYTLGARRSHHKWRSFCITDGKSLQPTPAVRSSDPKGLLFIFTGQGAQWSDVLLNSQEISSAEYAQPLCTAIQIGLTNLLREWKITPDGVVGHSSGEIAAAYAVGALEMRDAIHVAFYRGVASSQQKRPGAMAAVGLGRHEVSNLLSAGTTIACENSRSSVTISGDYDAVEDTLDRVRQYWPDALARKLKIDRAYHSDHMRSVGILYEELISEIKTSTKSLTIPFFSSVTGQATYDASLLGPTYWRANMERPVLFLSAVENALDSMQEFGLALELGPHSALSGPFRQICKELDKRIIYNSCLSRGADATTTILTAIGQLYCQGLAPDFSALNPGGVTMSNLPPYPWTHDASYWNESRISREFRTRPHPEHELLGARVIGGNDMEPSWRKLLNLKEVAWLSDHVVAEDVVFPAAGYVAMAGEAIKQITGTAGFTIRSLSIGSAMPLNNARATEIITRLQPHRLTDDQDSTWFDFSVMSYDGNTWTRHCNGKVHPGNASTLSMEEKKSSPAEDGVRGVISAKWYQAAKAAGLEYGPTFQGLQDASYNVTRDCISSTLQTPLQTSSVLHPTTMDQLLQCCILGSVKGHLRLMSKLVLPVHIDEMYIADSHSFEGLYCETHSDFTGADMMEARGHIRVGNGSLALQAKGIRFRILENNRSKENALQELRLLEWRPSIDLVDLRQLVQQTTDLSGCLELVERLNILCVLGTTRILKSMENTQHHFKRFKEWNEEYVNNIRLNGSNVVQDTDHIFEMTSAECEFAIKELTAEALETPARDIALAITRIFYDVENIFTGAAEPLAVLLRDDLLMKIYNFFNMLDHRHFFQLLGHNKKTLRIIEIGAGTGGFTSTIVPALTDSAGGCLFSTYTYTDISSGFFKAAKERFSEYPGIEYTVLDISEDPASQGLELNSYDLVVAANAKAKWVNYIMGTLSGWWLGEPDGRINEPYIQAQQWDDILQKAGFENVTAIMDQSPPFQLDNIVIANAVDDALAPPKALSLLVPDTTQVAGPAAELVSKFQSEGYEVSLCSLWDLPTAPLDIVSLLDIMEPQTFFQGLTDRDLRGLIRFITHTHGQKLLWLTGPAQISTKDPHSAMVLGFARTLRLELGTIFATMELDIAAEPSPWNSVVEVFAKLQSQGTDDLVDCEYALVDGTVQVPRYITRSSEAVLPVASEQISRQLHVAKPGLLSSLQWQGSSREAELKEGELEIAVRASSVNYQDALLALGHVHSNHGLGLDCAGIVTHINSRAGKDNLQVGDRVLCWSAGSLSTHVRADSQRCIKIPDTLNFDVAVTMPTTYGTMIRGLIEIDAMGVAAIQIARMQGAEIYATAATEEEKHFLTTEHDIPMSRIFSSQDNSFVTAIMHDTQSRGVDIVVNSLSGELLHESWKCVAEGGNMIDISGKDVSGHGKLDMALFNGNRGFHGLDMASLVSKKPSLTRRLLEASIKLYTDGLVKPIRPITRFSTSDVKHAFHQFQGHRPIGAICIEFPDDPLSFPIDSFDDKTRFREDRSYVLIGGLGGLGRSAAVWLAERGAGSIIFMSRSASPSVESTSLVRELKALGCEVQIFTGSVTDASAVENLVANAAKPIAGMLHLALVLKDEAVLDMTFDSWQGATEAKVQGTWNLHNALKDQPLDFFILLSSIYGVQGNPKQANYAAASTFLDAFVQFRQQLGLPASVIDLGVMEDIGFVSQHPTILENLRRAGAQLIRENDFIGALQLAVRASSQPAPAPPTLASGYVNRAQFVVGLGQHPPDARGLGLKVDGTIQGQNNTQAVAKEDGDALKQFMENATRDPSSLEDETAVAEFLAAQVAECLKTLLIFSDSSDLNLKLGLAELGVDSLIAIELQTWWIQNFATNVTILELTKSASVMDLGKLARSRILEELHGRDG.

Residues 10-429 enclose the Ketosynthase family 3 (KS3) domain; it reads PSPIAIVGIG…GANAHVILEG (420 aa). Residues cysteine 180, histidine 316, and histidine 352 each act as for beta-ketoacyl synthase activity in the active site. A malonyl-CoA:ACP transacylase (MAT) domain region spans residues 528–796; that stretch reads FIFTGQGAQW…NSCLSRGADA (269 aa). The tract at residues 858–986 is N-terminal hotdog fold; that stretch reads HELLGARVIG…GKVHPGNAST (129 aa). The tract at residues 858–1142 is dehydratase (DH) domain; the sequence is HELLGARVIG…GIRFRILENN (285 aa). The region spanning 858–1145 is the PKS/mFAS DH domain; the sequence is HELLGARVIG…FRILENNRSK (288 aa). Histidine 890 acts as the Proton acceptor; for dehydratase activity in catalysis. The segment at 1001–1145 is C-terminal hotdog fold; that stretch reads VRGVISAKWY…FRILENNRSK (145 aa). Residue aspartate 1059 is the Proton donor; for dehydratase activity of the active site. A methyltransferase (CMet) domain region spans residues 1309 to 1456; it reads FFQLLGHNKK…FENVTAIMDQ (148 aa). Residues 1669–1968 form an enoyl reductase (ER) (ER) domain region; it reads GLLSSLQWQG…GHRPIGAICI (300 aa). The ketoreductase (KR) domain stretch occupies residues 1993 to 2167; the sequence is SYVLIGGLGG…ASVIDLGVME (175 aa). The 83-residue stretch at 2280-2362 folds into the Carrier domain; it reads EDETAVAEFL…DLGKLARSRI (83 aa). Serine 2322 carries the O-(pantetheine 4'-phosphoryl)serine modification.

It functions in the pathway secondary metabolite biosynthesis; terpenoid biosynthesis. Highly reducing polyketide synthase; part of the gene cluster that mediates the biosynthesis of the meroterpenoids nectripenoids A and B, as well as cochliquninone D and isocochliquninone E. The pathway probably begins with the HR-PKS ntnH that catalyzes two chain-extension steps to form a reduced triketide, which then primes the SAT domain in the NR-PKS ntnG to initiate three more cycles of extension to give a linear hexaketide corresponding to the polyketide part of nectripenoids. The FAD-dependent monooxygenase ntnJ then performs an oxidative decarboxylation at C11 of the ntnH/ntnG product, via an electrophilic aromatic hydroxylation with concomitant ipso-decarboxylation. The membrane-bound polyprenyl transferase ntnF then introduces a farnesyl group before the FAD-dependent monooxygenase ntnK functions as the first epoxidase on terminal C12'-C13' olefin, followed by a second epoxidation on C7'-C8' catalyzed by ntnA. The terpene cyclase/mutase ntnI then initiates the sequential tricyclic ring formation through protonation of the terminal epoxide and catalyzes the regioselective and stereoselective 6/6/6-tricyclic ring formation. The cytochrome P450 monooxygenase ntnM may then hydroxylate C1'. This is Highly reducing polyketide synthase ntnH from Nectria sp.